We begin with the raw amino-acid sequence, 406 residues long: Tryptophan synthase beta chain (406 aa).

The residue at position 99 (lysine 99) is an N6-(pyridoxal phosphate)lysine.

This sequence belongs to the TrpB family. Tetramer of two alpha and two beta chains. Pyridoxal 5'-phosphate is required as a cofactor.

The enzyme catalyses (1S,2R)-1-C-(indol-3-yl)glycerol 3-phosphate + L-serine = D-glyceraldehyde 3-phosphate + L-tryptophan + H2O. It participates in amino-acid biosynthesis; L-tryptophan biosynthesis; L-tryptophan from chorismate: step 5/5. Functionally, the beta subunit is responsible for the synthesis of L-tryptophan from indole and L-serine. In Allorhizobium ampelinum (strain ATCC BAA-846 / DSM 112012 / S4) (Agrobacterium vitis (strain S4)), this protein is Tryptophan synthase beta chain.